The following is a 393-amino-acid chain: Chorismate synthase (393 aa).

The NADP(+) site is built by Arg40 and Arg46. FMN-binding positions include Arg129–Ser131, Gln249–Ala250, Gly301, Lys316–Thr320, and Arg342.

Belongs to the chorismate synthase family. In terms of assembly, homotetramer. Requires FMNH2 as cofactor.

The catalysed reaction is 5-O-(1-carboxyvinyl)-3-phosphoshikimate = chorismate + phosphate. Its pathway is metabolic intermediate biosynthesis; chorismate biosynthesis; chorismate from D-erythrose 4-phosphate and phosphoenolpyruvate: step 7/7. Catalyzes the anti-1,4-elimination of the C-3 phosphate and the C-6 proR hydrogen from 5-enolpyruvylshikimate-3-phosphate (EPSP) to yield chorismate, which is the branch point compound that serves as the starting substrate for the three terminal pathways of aromatic amino acid biosynthesis. This reaction introduces a second double bond into the aromatic ring system. The sequence is that of Chorismate synthase from Geotalea uraniireducens (strain Rf4) (Geobacter uraniireducens).